Consider the following 549-residue polypeptide: MSMFCFQCQETAKGTGCTIKGVCGKTADVANLQDLLLYVMKGIAINSLQARELGIVRQDVDKFVMEGLFATITNANFDNARFVALVREGLALRDSLKADIVKAGGVLPANLHDSATWTADSAEEFEQKAAQVGILATENEDVRSLRELLIYGLKGMAAYAEHAFALGYEDNSIFAFMMKGLAATTDDSLSADQLVALVLEAGKYGVDVMALLDKANTTSYGNPEITKVNIGVRNNPAILISGHDLRDLEDLLKQTEGTGVDVYTHGEMLPAHYYPAFKKYAHFVGNYGNAWWKQDKEFDSFNGAILLTTNCLVPPKDSYKDRLFTTSVVGYEGVKHIPAREAGKVKDFSAVIELAKTLPAPTEIETGEIVGGFAHNQVFAVADKVVEAVKSGAVKRFFVMAGCDGRMKSRDYYTEFAKALPQDTIILTAGCAKYKYNKLALGDIGGIPRVLDAGQCNDSYSLAVIALKLKEVFGLDDVNQLPISYNIAWYEQKAVIVLLALLYLGVKNIHLGPTLPGFLSPNVAKVLVENFGIAGITTVEDDVNLFMGA.

The [4Fe-4S] cluster site is built by cysteine 5, cysteine 8, cysteine 17, and cysteine 23. Hybrid [4Fe-2O-2S] cluster-binding residues include histidine 243, glutamate 267, cysteine 311, cysteine 403, cysteine 431, cysteine 456, glutamate 491, and lysine 493. Cysteine 403 bears the Cysteine persulfide mark.

Belongs to the HCP family. The cofactor is [4Fe-4S] cluster. Requires hybrid [4Fe-2O-2S] cluster as cofactor.

It is found in the cytoplasm. The catalysed reaction is A + NH4(+) + H2O = hydroxylamine + AH2 + H(+). Functionally, catalyzes the reduction of hydroxylamine to form NH(3) and H(2)O. The polypeptide is Hydroxylamine reductase (Desulfitobacterium hafniense (strain DSM 10664 / DCB-2)).